The primary structure comprises 158 residues: Small ribosomal subunit protein uS15 (158 aa).

A compositionally biased stretch (basic residues) spans 1–18; that stretch reads MARMHARKRGKSGSKRPP. Residues 1–21 are disordered; it reads MARMHARKRGKSGSKRPPRTA.

This sequence belongs to the universal ribosomal protein uS15 family. As to quaternary structure, part of the 30S ribosomal subunit.

The sequence is that of Small ribosomal subunit protein uS15 from Pyrococcus abyssi (strain GE5 / Orsay).